The sequence spans 644 residues: Protein cueball (644 aa).

The first 26 residues, 1–26, serve as a signal peptide directing secretion; the sequence is MIRIRFGMDVLLVLLLATCLLTPAHG. The Extracellular segment spans residues 27-531; that stretch reads TPLEWDFAVT…VCLTPRVWTS (505 aa). Residues N82 and N108 are each glycosylated (N-linked (GlcNAc...) asparagine). 3 LDL-receptor class B repeats span residues 121 to 166, 167 to 211, and 212 to 257; these read MNLF…DVCR, RKLY…DQLS, and DRLF…TNDA. N175 and N190 each carry an N-linked (GlcNAc...) asparagine glycan. The disordered stretch occupies residues 280–301; it reads TTTSKPEEEDSTDSTDFTDPEP. Acidic residues predominate over residues 286–301; the sequence is EEEDSTDSTDFTDPEP. A glycan (N-linked (GlcNAc...) asparagine) is linked at N313. 2 consecutive EGF-like domains span residues 398–430 and 433–471; these read EIRE…FTGE and ELSV…ARCE. 5 disulfide bridges follow: C402/C411, C406/C421, C437/C447, C441/C459, and C461/C470. N-linked (GlcNAc...) asparagine glycans are attached at residues N473 and N508. The chain crosses the membrane as a helical span at residues 532–552; the sequence is SVIIILVVGIVSSLLLVAVIV. At 553–644 the chain is on the cytoplasmic side; sequence HGIRRLYKPK…LIHNMEDDLY (92 aa).

This sequence belongs to the cueball family.

Its subcellular location is the cell membrane. In terms of biological role, has a role in spermatogenesis and oogenesis. The chain is Protein cueball from Drosophila sechellia (Fruit fly).